Here is a 61-residue protein sequence, read N- to C-terminus: Weak toxin CM-2a (61 aa).

4 disulfides stabilise this stretch: Cys3–Cys19, Cys12–Cys37, Cys41–Cys49, and Cys50–Cys55.

Belongs to the three-finger toxin family. Short-chain subfamily. Orphan group XX sub-subfamily. As to expression, expressed by the venom gland.

Its subcellular location is the secreted. The chain is Weak toxin CM-2a from Naja annulifera (Banded Egyptian cobra).